The primary structure comprises 275 residues: Uronate dehydrogenase (275 aa).

Residues 22–23 (GL), 42–44 (DIA), 60–61 (DL), and 80–84 (FGGVS) each bind NAD(+). Substrate-binding positions include S84 and 120–122 (SNH). Catalysis depends on Y145, which acts as the Proton acceptor. K149 contacts NAD(+). S174 contributes to the substrate binding site. S175 is an NAD(+) binding site. R183 is a binding site for substrate.

It belongs to the NAD(P)-dependent epimerase/dehydratase family. In terms of assembly, homohexamer.

The catalysed reaction is beta-D-galacturonate + NAD(+) = D-galactaro-1,5-lactone + NADH + H(+). The enzyme catalyses beta-D-glucuronate + NAD(+) = D-glucaro-1,5-lactone + NADH + H(+). The protein operates within carbohydrate acid metabolism; D-galacturonate degradation via prokaryotic oxidative pathway. In terms of biological role, catalyzes the oxidation of beta-D-galacturonate and beta-D-glucuronate to galactarate and D-glucarate, respectively. Cannot use NADP(+) instead of NAD(+) as cosubstrate. The protein is Uronate dehydrogenase (udh) of Pseudomonas syringae pv. tomato (strain ATCC BAA-871 / DC3000).